The sequence spans 148 residues: 3-dehydroquinate dehydratase (148 aa).

Asn74, His80, and Asp87 together coordinate substrate. His100 acts as the Proton donor in catalysis. Residues Leu101 to Ser102 and Arg111 each bind substrate.

This sequence belongs to the type-II 3-dehydroquinase family. Homododecamer.

It catalyses the reaction 3-dehydroquinate = 3-dehydroshikimate + H2O. The protein operates within metabolic intermediate biosynthesis; chorismate biosynthesis; chorismate from D-erythrose 4-phosphate and phosphoenolpyruvate: step 3/7. This is 3-dehydroquinate dehydratase (yqhS) from Bacillus subtilis (strain 168).